The primary structure comprises 338 residues: Secretory carrier-associated membrane protein 1 (338 aa).

The segment at 1–64 (MSDFDSNPFA…NVPNTQPAIM (64 aa)) is disordered. S2 bears the N-acetylserine mark. S2 carries the post-translational modification Phosphoserine. Residues 2 to 155 (SDFDSNPFAD…QKTVKLMYYL (154 aa)) are Cytoplasmic-facing. Position 45 is a phosphothreonine (T45). Residues 156–176 (WMFHAVTLFLNIFGCLAWFCV) traverse the membrane as a helical segment. At 177–181 (DSARA) the chain is on the lumenal side. A helical transmembrane segment spans residues 182 to 202 (VDFGLSILWFLLFTPCSFVCW). Over 203-218 (YRPLYGAFRSDSSFRF) the chain is Cytoplasmic. The chain crosses the membrane as a helical span at residues 219 to 239 (FVFFFVYICQFAVHVLQAAGF). Residues 240–261 (HNWGNCGWISSLTGLNQNIPVG) lie on the Lumenal side of the membrane. A helical transmembrane segment spans residues 262 to 282 (IMMIIIAALFTASAVISLVMF). The Cytoplasmic portion of the chain corresponds to 283–338 (KKVHGLYRTTGASFEKAQQEFATGVMSNKTVQTAAANAASTAASSAAQNAFKGNQI).

Belongs to the SCAMP family. Interacts with SYNRG and ITSN1. Interacts with SLC9A7. Widely expressed, with highest expression in brain.

It is found in the golgi apparatus. The protein localises to the trans-Golgi network membrane. Its subcellular location is the recycling endosome membrane. Its function is as follows. Functions in post-Golgi recycling pathways. Acts as a recycling carrier to the cell surface. The protein is Secretory carrier-associated membrane protein 1 (SCAMP1) of Homo sapiens (Human).